We begin with the raw amino-acid sequence, 98 residues long: Toxin ParE1 (98 aa).

This sequence belongs to the RelE toxin family.

Functionally, toxic component of a type II toxin-antitoxin (TA) system. Its toxic effect is neutralized by coexpression with cognate antitoxin ParD1. The polypeptide is Toxin ParE1 (parE1) (Mycobacterium tuberculosis (strain CDC 1551 / Oshkosh)).